A 508-amino-acid chain; its full sequence is ATP synthase subunit alpha, chloroplastic (508 aa).

Residue 171–178 participates in ATP binding; the sequence is GDRQTGKT.

Belongs to the ATPase alpha/beta chains family. F-type ATPases have 2 components, CF(1) - the catalytic core - and CF(0) - the membrane proton channel. CF(1) has five subunits: alpha(3), beta(3), gamma(1), delta(1), epsilon(1). CF(0) has four main subunits: a, b, b' and c.

It localises to the plastid. Its subcellular location is the chloroplast thylakoid membrane. It carries out the reaction ATP + H2O + 4 H(+)(in) = ADP + phosphate + 5 H(+)(out). Functionally, produces ATP from ADP in the presence of a proton gradient across the membrane. The alpha chain is a regulatory subunit. The chain is ATP synthase subunit alpha, chloroplastic from Gnetum parvifolium (Small-leaved jointfir).